A 328-amino-acid polypeptide reads, in one-letter code: Sterol-4-alpha-carboxylate 3-dehydrogenase, decarboxylating (328 aa).

The active-site Proton acceptor is Y145. K149 contacts NAD(+). A helical transmembrane segment spans residues 259–279 (LHMVLPTPIALSLVWIMALIW).

Belongs to the 3-beta-HSD family. In terms of assembly, homodimer.

The protein resides in the endoplasmic reticulum membrane. Its subcellular location is the lipid droplet. It carries out the reaction a 3beta-hydroxysteroid-4alpha-carboxylate + NADP(+) = a 3-oxosteroid + CO2 + NADPH. The enzyme catalyses a 3beta-hydroxysteroid-4alpha-carboxylate + NAD(+) = a 3-oxosteroid + CO2 + NADH. It functions in the pathway steroid biosynthesis; zymosterol biosynthesis; zymosterol from lanosterol: step 4/6. In terms of biological role, catalyzes the NAD(P)(+)-dependent oxidative decarboxylation of the C4 methyl groups of 4-alpha-carboxysterols in post-squalene cholesterol biosynthesis. The protein is Sterol-4-alpha-carboxylate 3-dehydrogenase, decarboxylating (nsdhl) of Dictyostelium discoideum (Social amoeba).